The primary structure comprises 913 residues: Rab GTPase-activating protein tbc-8 (913 aa).

A disordered region spans residues 1–24 (MQMFRHSSADMWRAKKPTLERRST). The region spanning 106 to 240 (NLNSPYVTSL…TYRRMSNRIE (135 aa)) is the RUN domain. Residues 597 to 844 (INTKEVRRMA…KVWEVIWAAQ (248 aa)) form the Rab-GAP TBC domain.

It belongs to the RUTBC family. Interacts with rab-19. Interacts with ric-19; the interaction is direct and may be required for the activation of rab-2 and dense vesicle maturation in cholinergic motoneurons. Interacts (via RUN domain) with rund-1. Does not interact with unc-108 (GTP-bound form). As to expression, expressed in neurons in the head, tail and ventral nerve cord (at protein level).

It is found in the golgi apparatus. It localises to the trans-Golgi network. The protein localises to the early endosome. The protein resides in the cytoplasmic vesicle membrane. Interacts with numerous Rab family members, functioning as Rab effector for some, and as GTPase activator for others. GTPase activator for rab-2. In association with ric-19 activates rab-2 during dense core vesicle maturation in cholinergic motoneurons. The polypeptide is Rab GTPase-activating protein tbc-8 (Caenorhabditis elegans).